The sequence spans 126 residues: 3-aminoacrylate deaminase RutC (126 aa).

It belongs to the RutC family.

The enzyme catalyses (Z)-3-aminoacrylate + H2O + H(+) = 3-oxopropanoate + NH4(+). In terms of biological role, involved in pyrimidine catabolism. Catalyzes the deamination of 3-aminoacrylate to malonic semialdehyde, a reaction that can also occur spontaneously. RutC may facilitate the reaction and modulate the metabolic fitness, rather than catalyzing essential functions. The sequence is that of 3-aminoacrylate deaminase RutC from Acinetobacter baylyi (strain ATCC 33305 / BD413 / ADP1).